The following is a 347-amino-acid chain: Geranylgeranyl pyrophosphate synthase 7, chloroplastic (347 aa).

A chloroplast-targeting transit peptide spans 1–39; sequence MTTLNLSIFPSVKISSSASIPGFIKIQPFLLRRKLSTVL. Positions 95, 98, and 127 each coordinate isopentenyl diphosphate. The Mg(2+) site is built by Asp-134 and Asp-140. Arg-145 is a binding site for dimethylallyl diphosphate. Arg-146 provides a ligand contact to isopentenyl diphosphate. Residues Lys-232, Thr-233, Gln-270, Lys-287, and Lys-297 each coordinate dimethylallyl diphosphate.

The protein belongs to the FPP/GGPP synthase family. Monomer. The cofactor is Mg(2+).

It localises to the plastid. The protein localises to the chloroplast. The enzyme catalyses isopentenyl diphosphate + dimethylallyl diphosphate = (2E)-geranyl diphosphate + diphosphate. It catalyses the reaction isopentenyl diphosphate + (2E)-geranyl diphosphate = (2E,6E)-farnesyl diphosphate + diphosphate. It carries out the reaction isopentenyl diphosphate + (2E,6E)-farnesyl diphosphate = (2E,6E,10E)-geranylgeranyl diphosphate + diphosphate. Its pathway is isoprenoid biosynthesis; farnesyl diphosphate biosynthesis; farnesyl diphosphate from geranyl diphosphate and isopentenyl diphosphate: step 1/1. It participates in isoprenoid biosynthesis; geranyl diphosphate biosynthesis; geranyl diphosphate from dimethylallyl diphosphate and isopentenyl diphosphate: step 1/1. The protein operates within isoprenoid biosynthesis; geranylgeranyl diphosphate biosynthesis; geranylgeranyl diphosphate from farnesyl diphosphate and isopentenyl diphosphate: step 1/1. Functionally, catalyzes the trans-addition of the three molecules of IPP onto DMAPP to form geranylgeranyl pyrophosphate. This chain is Geranylgeranyl pyrophosphate synthase 7, chloroplastic, found in Arabidopsis thaliana (Mouse-ear cress).